A 376-amino-acid chain; its full sequence is Mitogen-activated protein kinase 6 (376 aa).

A Protein kinase domain is found at 43–329 (APPIRPIGRG…VDEALHHPYL (287 aa)). Residues 49-57 (IGRGAYGIV) and Lys72 contribute to the ATP site. Residue Asp169 is the Proton acceptor of the active site. The residue at position 201 (Thr201) is a Phosphothreonine. Positions 201–203 (TEY) match the TXY motif. At Tyr203 the chain carries Phosphotyrosine.

This sequence belongs to the protein kinase superfamily. CMGC Ser/Thr protein kinase family. MAP kinase subfamily. Post-translationally, dually phosphorylated on Thr-201 and Tyr-203, which activates the enzyme.

The enzyme catalyses L-seryl-[protein] + ATP = O-phospho-L-seryl-[protein] + ADP + H(+). The catalysed reaction is L-threonyl-[protein] + ATP = O-phospho-L-threonyl-[protein] + ADP + H(+). Activated by threonine and tyrosine phosphorylation. This Oryza sativa subsp. japonica (Rice) protein is Mitogen-activated protein kinase 6 (MPK6).